Here is a 242-residue protein sequence, read N- to C-terminus: Small ribosomal subunit protein uS2 (242 aa).

It belongs to the universal ribosomal protein uS2 family.

The protein is Small ribosomal subunit protein uS2 of Shewanella woodyi (strain ATCC 51908 / MS32).